A 330-amino-acid polypeptide reads, in one-letter code: ADP-L-glycero-D-manno-heptose-6-epimerase (330 aa).

NADP(+)-binding positions include 11-12 (FI), 32-33 (DN), Lys39, Lys54, 75-79 (EGACS), and Asn92. The active-site Proton acceptor is Tyr139. Lys143 contributes to the NADP(+) binding site. Substrate is bound at residue Asn168. Residues Val169 and Lys177 each coordinate NADP(+). Lys177 (proton acceptor) is an active-site residue. Substrate is bound by residues Arg179, His186, 200-203 (FGEY), Arg213, and Tyr292.

The protein belongs to the NAD(P)-dependent epimerase/dehydratase family. HldD subfamily. As to quaternary structure, homopentamer. It depends on NADP(+) as a cofactor.

The enzyme catalyses ADP-D-glycero-beta-D-manno-heptose = ADP-L-glycero-beta-D-manno-heptose. It functions in the pathway nucleotide-sugar biosynthesis; ADP-L-glycero-beta-D-manno-heptose biosynthesis; ADP-L-glycero-beta-D-manno-heptose from D-glycero-beta-D-manno-heptose 7-phosphate: step 4/4. Catalyzes the interconversion between ADP-D-glycero-beta-D-manno-heptose and ADP-L-glycero-beta-D-manno-heptose via an epimerization at carbon 6 of the heptose. The sequence is that of ADP-L-glycero-D-manno-heptose-6-epimerase from Paraburkholderia xenovorans (strain LB400).